A 239-amino-acid chain; its full sequence is Fatty acid metabolism regulator protein (239 aa).

The region spanning 6–74 is the HTH gntR-type domain; the sequence is QSPAGFAEEY…HGKPTKVNNF (69 aa). The segment at residues 34–53 is a DNA-binding region (H-T-H motif); it reads ERELSELIGVTRTTLREVLQ.

As to quaternary structure, homodimer.

It localises to the cytoplasm. In terms of biological role, multifunctional regulator of fatty acid metabolism. This chain is Fatty acid metabolism regulator protein, found in Klebsiella pneumoniae subsp. pneumoniae (strain ATCC 700721 / MGH 78578).